Here is a 294-residue protein sequence, read N- to C-terminus: Bifunctional protein FolD (294 aa).

NADP(+) contacts are provided by residues 166 to 168 (GRS), Ser-191, and Ile-232.

This sequence belongs to the tetrahydrofolate dehydrogenase/cyclohydrolase family. In terms of assembly, homodimer.

It catalyses the reaction (6R)-5,10-methylene-5,6,7,8-tetrahydrofolate + NADP(+) = (6R)-5,10-methenyltetrahydrofolate + NADPH. The enzyme catalyses (6R)-5,10-methenyltetrahydrofolate + H2O = (6R)-10-formyltetrahydrofolate + H(+). Its pathway is one-carbon metabolism; tetrahydrofolate interconversion. Its function is as follows. Catalyzes the oxidation of 5,10-methylenetetrahydrofolate to 5,10-methenyltetrahydrofolate and then the hydrolysis of 5,10-methenyltetrahydrofolate to 10-formyltetrahydrofolate. The polypeptide is Bifunctional protein FolD (Bradyrhizobium sp. (strain ORS 278)).